Reading from the N-terminus, the 520-residue chain is Hydroxymethylglutaryl-CoA synthase, cytoplasmic (520 aa).

A Phosphoserine modification is found at S4. (3S)-3-hydroxy-3-methylglutaryl-CoA is bound by residues D43 and A44. 44-46 (AGK) serves as a coordination point for CoA. K46 is modified (N6-acetyllysine). E95 acts as the Proton donor/acceptor in catalysis. Positions 129, 167, 171, 221, and 264 each coordinate (3S)-3-hydroxy-3-methylglutaryl-CoA. C129 serves as the catalytic Acyl-thioester intermediate. A CoA-binding site is contributed by N167. S221 contributes to the CoA binding site. H264 functions as the Proton donor/acceptor in the catalytic mechanism. CoA contacts are provided by K269 and K273. K273, N343, and S377 together coordinate (3S)-3-hydroxy-3-methylglutaryl-CoA. An N6-acetyllysine modification is found at K273. The interval 487–520 (NTATEHIPSPAKKVPRLPATSGEPESAVISNGEH) is disordered. Phosphoserine is present on residues S495 and S516.

It belongs to the thiolase-like superfamily. HMG-CoA synthase family. As to quaternary structure, homodimer.

It localises to the cytoplasm. It catalyses the reaction acetoacetyl-CoA + acetyl-CoA + H2O = (3S)-3-hydroxy-3-methylglutaryl-CoA + CoA + H(+). The protein operates within metabolic intermediate biosynthesis; (R)-mevalonate biosynthesis; (R)-mevalonate from acetyl-CoA: step 2/3. Catalyzes the condensation of acetyl-CoA with acetoacetyl-CoA to form HMG-CoA, which is converted by HMG-CoA reductase (HMGCR) into mevalonate, a precursor for cholesterol synthesis. This is Hydroxymethylglutaryl-CoA synthase, cytoplasmic from Rattus norvegicus (Rat).